Reading from the N-terminus, the 185-residue chain is Probable chorismate pyruvate-lyase 2 (185 aa).

Substrate-binding residues include Arg80, Leu118, and Glu170.

The protein belongs to the UbiC family.

It is found in the cytoplasm. The enzyme catalyses chorismate = 4-hydroxybenzoate + pyruvate. It functions in the pathway cofactor biosynthesis; ubiquinone biosynthesis. Functionally, removes the pyruvyl group from chorismate, with concomitant aromatization of the ring, to provide 4-hydroxybenzoate (4HB) for the ubiquinone pathway. The protein is Probable chorismate pyruvate-lyase 2 of Pseudomonas entomophila (strain L48).